The primary structure comprises 243 residues: Terpene cyclase janB (243 aa).

The next 7 helical transmembrane spans lie at 19–39 (LADL…VGMV), 48–68 (YGMA…YCVF), 77–97 (LGVF…AIIF), 112–132 (LPWI…ALAA), 134–154 (IGPS…LSVG), 172–194 (LWLS…WMYW), and 205–225 (LVLW…VCFW).

It belongs to the paxB family.

It is found in the membrane. The protein operates within secondary metabolite biosynthesis. Terpene cyclase; part of the gene cluster that mediates the biosynthesis of the indole diterpenes janthitremanes such as shearinine K or shearinine A. The geranylgeranyl diphosphate (GGPP) synthase janG catalyzes the first step in janthitremane biosynthesis via conversion of farnesyl pyrophosphate and isopentyl pyrophosphate into geranylgeranyl pyrophosphate (GGPP). Condensation of indole-3-glycerol phosphate with GGPP by the prenyl transferase janC then forms 3-geranylgeranylindole (3-GGI). Epoxidation by the FAD-dependent monooxygenase janM leads to a epoxidized-GGI that is substrate of the terpene cyclase janB for cyclization to yield paspaline. Paspaline is subsequently converted to 13-desoxypaspaline by the cytochrome P450 monooxygenase janP, via beta-PC-M6 in a series of alpha-face oxidations. The cytochrome P450 monooxygenase janQ is proposed to carry out sequential beta-face oxidation steps at C-7 and C-13 of 13-desoxypaspaline to form paspalicine and paspalinine respectively. The indole diterpene prenyltransferase janD may then convert paspalinine into shearinine K which is substrate of janO and/or additional enzymes for oxidation and cyclization to generate shearinine A. This Penicillium janthinellum (Penicillium vitale) protein is Terpene cyclase janB.